The following is a 267-amino-acid chain: Undecaprenyl-diphosphatase (267 aa).

7 helical membrane-spanning segments follow: residues 39-59 (QGLA…ILYF), 87-107 (WMIA…KDFI), 111-131 (LRSA…LWWV), 149-169 (ALFI…RSGA), 189-209 (FLMS…KLVT), 218-238 (ALSI…HAFL), and 244-264 (VGMM…IAFL).

Belongs to the UppP family.

Its subcellular location is the cell inner membrane. It carries out the reaction di-trans,octa-cis-undecaprenyl diphosphate + H2O = di-trans,octa-cis-undecaprenyl phosphate + phosphate + H(+). Its function is as follows. Catalyzes the dephosphorylation of undecaprenyl diphosphate (UPP). Confers resistance to bacitracin. In Photobacterium profundum (strain SS9), this protein is Undecaprenyl-diphosphatase.